Consider the following 630-residue polypeptide: Terpinolene synthase, chloroplastic (630 aa).

Residues 1-52 (MALVSILPLSSKSVLHKSWIVSTYEHKAISRTIPNLGLRGRGKSVTHSLRMS) constitute a chloroplast transit peptide. Positions 381, 385, 525, and 533 each coordinate Mg(2+). The DDXXD motif motif lies at 381–385 (DDIYD).

Belongs to the terpene synthase family. Tpsd subfamily. Mg(2+) serves as cofactor. It depends on Mn(2+) as a cofactor. The cofactor is K(+).

Its subcellular location is the plastid. The protein resides in the chloroplast. The catalysed reaction is (2E)-geranyl diphosphate = terpinolene + diphosphate. The protein operates within terpene metabolism; oleoresin biosynthesis. In terms of biological role, involved in defensive oleoresin formation in conifers in response to insect attack or other injury. Involved in monoterpene (C10) olefins biosynthesis. The polypeptide is Terpinolene synthase, chloroplastic (ag9) (Abies grandis (Grand fir)).